Consider the following 79-residue polypeptide: RNA-binding protein Hfq (79 aa).

In terms of domain architecture, Sm spans 10–70 (DAFLNHVRKT…ISTIMPAQPI (61 aa)).

It belongs to the Hfq family. As to quaternary structure, homohexamer.

In terms of biological role, RNA chaperone that binds small regulatory RNA (sRNAs) and mRNAs to facilitate mRNA translational regulation in response to envelope stress, environmental stress and changes in metabolite concentrations. Also binds with high specificity to tRNAs. The protein is RNA-binding protein Hfq of Ruegeria sp. (strain TM1040) (Silicibacter sp.).